The chain runs to 293 residues: MFIALWEFFYGHFFRFWMKWLLRQMTGKCELQRIFDTYVGAQRTHRIENSLTYSKNKVLQKATLVVQSEVDRCVEDIMKEKNINPEKDASFKICMKACLLQISGYKQLYLDVESVRKKPYDSDNLQHEKLLIKLWNLLMPTKKLKARISKQWADIGFQGDDPKTDFRGMGILGLINLVYFSENYTSEAHQILSRSNHPKLGYSYAIVGINLTEMAYSLLKSEALKFHLYNFVPGIPTMEHFHQFYCYLVYEFDKFWFEEKPESIMYFNVYREKFHEKIKGLLLDCNVSLTLKI.

One can recognise an ELMO domain in the interval 126 to 282 (QHEKLLIKLW…KFHEKIKGLL (157 aa)).

Its function is as follows. Acts as a GTPase-activating protein (GAP) toward guanine nucleotide exchange factors like ARL2, ARL3, ARF1 and ARF6, but not for GTPases outside the Arf family. The polypeptide is ELMO domain-containing protein 2 (ELMOD2) (Bos taurus (Bovine)).